The sequence spans 186 residues: UPF0157 protein SCO7215 (186 aa).

This sequence belongs to the UPF0157 (GrpB) family.

The polypeptide is UPF0157 protein SCO7215 (Streptomyces coelicolor (strain ATCC BAA-471 / A3(2) / M145)).